Here is an 857-residue protein sequence, read N- to C-terminus: Inactive rhomboid protein 1 (857 aa).

Over 1–413 (MAELRRDSTS…HRPFFTYWIT (413 aa)) the chain is Cytoplasmic. The tract at residues 283-307 (FESPSDSTMKDVDSKQLDESELTGS) is disordered. The segment covering 290–300 (TMKDVDSKQLD) has biased composition (basic and acidic residues). The chain crosses the membrane as a helical span at residues 414–434 (FVHILITILAVCIYGIAPVGF). Residues 435–661 (SQHETVDSVL…PDQFYRLWLS (227 aa)) are Lumenal-facing. The N-linked (GlcNAc...) asparagine glycan is linked to N585. A helical membrane pass occupies residues 662–682 (LFLHAGILHCLVSVCFQMTIL). At 683 to 693 (RDLEKLAGWLR) the chain is on the cytoplasmic side. A helical transmembrane segment spans residues 694 to 714 (ISIIYILSGITGNLASAIFLP). At 715-716 (YR) the chain is on the lumenal side. A helical transmembrane segment spans residues 717 to 737 (AEVGPAGSQFGILACLFVELI). At 738 to 748 (QSWQILAQPWR) the chain is on the cytoplasmic side. A helical transmembrane segment spans residues 749 to 769 (AFTKLLCVVLFLFAFGLLPWI). Over 770-774 (DNFAH) the chain is Lumenal. The helical transmembrane segment at 775-795 (ISGFISGFFLSFAFLPYISFG) threads the bilayer. Topologically, residues 796–805 (RLDMYRKRCQ) are cytoplasmic. A helical membrane pass occupies residues 806-826 (IIIFLVVFLGLFAGLVVLFYV). The Lumenal portion of the chain corresponds to 827–857 (HPIKCEWCELLTCIPFTDKFCEKYDLNAHLH).

The protein belongs to the peptidase S54 family.

The protein resides in the endoplasmic reticulum membrane. Its subcellular location is the golgi apparatus membrane. Functionally, regulates ADAM17 protease, a sheddase of the epidermal growth factor (EGF) receptor ligands and TNF, thereby plays a role in sleep, cell survival, proliferation, migration and inflammation. Does not exhibit any protease activity on its own. In Danio rerio (Zebrafish), this protein is Inactive rhomboid protein 1 (rhbdf1).